The following is a 77-amino-acid chain: Metallocarboxypeptidase inhibitor (77 aa).

The signal sequence occupies residues 1–32 (MAQKFTILFTILLVVIAAQDVMAQDATLTKLF). Gln33 is modified (pyrrolidone carboxylic acid). 3 cysteine pairs are disulfide-bonded: Cys39/Cys55, Cys43/Cys58, and Cys49/Cys65. Residues 70–77 (GRAMAIGV) constitute a propeptide, hydrophobic peptide.

To potato MCPI. Ovaries.

Functionally, may play a defensive role against insect attacks. This Solanum lycopersicum (Tomato) protein is Metallocarboxypeptidase inhibitor.